A 375-amino-acid polypeptide reads, in one-letter code: Succinyl-diaminopimelate desuccinylase (375 aa).

H66 serves as a coordination point for Zn(2+). The active site involves D68. D99 is a binding site for Zn(2+). The active-site Proton acceptor is the E133. 3 residues coordinate Zn(2+): E134, E162, and H348.

The protein belongs to the peptidase M20A family. DapE subfamily. Homodimer. Requires Zn(2+) as cofactor. Co(2+) is required as a cofactor.

It catalyses the reaction N-succinyl-(2S,6S)-2,6-diaminopimelate + H2O = (2S,6S)-2,6-diaminopimelate + succinate. It participates in amino-acid biosynthesis; L-lysine biosynthesis via DAP pathway; LL-2,6-diaminopimelate from (S)-tetrahydrodipicolinate (succinylase route): step 3/3. Functionally, catalyzes the hydrolysis of N-succinyl-L,L-diaminopimelic acid (SDAP), forming succinate and LL-2,6-diaminopimelate (DAP), an intermediate involved in the bacterial biosynthesis of lysine and meso-diaminopimelic acid, an essential component of bacterial cell walls. This is Succinyl-diaminopimelate desuccinylase from Escherichia coli O17:K52:H18 (strain UMN026 / ExPEC).